A 149-amino-acid polypeptide reads, in one-letter code: Nucleoside diphosphate kinase (149 aa).

The ATP site is built by Lys9, Phe57, Arg85, Thr91, Arg102, and Asn112. The Pros-phosphohistidine intermediate role is filled by His115.

It belongs to the NDK family. As to quaternary structure, homotetramer. Mg(2+) is required as a cofactor.

It is found in the cytoplasm. It carries out the reaction a 2'-deoxyribonucleoside 5'-diphosphate + ATP = a 2'-deoxyribonucleoside 5'-triphosphate + ADP. The catalysed reaction is a ribonucleoside 5'-diphosphate + ATP = a ribonucleoside 5'-triphosphate + ADP. Major role in the synthesis of nucleoside triphosphates other than ATP. The ATP gamma phosphate is transferred to the NDP beta phosphate via a ping-pong mechanism, using a phosphorylated active-site intermediate. The chain is Nucleoside diphosphate kinase from Cyanothece sp. (strain PCC 7425 / ATCC 29141).